Consider the following 360-residue polypeptide: Protein Wnt-2 (360 aa).

The N-terminal stretch at 1–25 (MNAPVGGIWLWLPLLLTWLSPEVSS) is a signal peptide. 11 disulfides stabilise this stretch: C76–C87, C127–C135, C137–C157, C206–C220, C208–C215, C278–C309, C294–C304, C308–C348, C324–C339, C326–C336, and C331–C332. A lipid anchor (O-palmitoleoyl serine; by PORCN) is attached at S212. N295 carries an N-linked (GlcNAc...) asparagine glycan.

It belongs to the Wnt family. Palmitoleoylation is required for efficient binding to frizzled receptors. Depalmitoleoylation leads to Wnt signaling pathway inhibition.

The protein localises to the secreted. It localises to the extracellular space. It is found in the extracellular matrix. In terms of biological role, ligand for members of the frizzled family of seven transmembrane receptors. Probable developmental protein. May be a signaling molecule which affects the development of discrete regions of tissues. Is likely to signal over only few cell diameters. The polypeptide is Protein Wnt-2 (WNT2) (Rhinolophus ferrumequinum (Greater horseshoe bat)).